The primary structure comprises 355 residues: Glycerol-3-phosphate dehydrogenase [NAD(P)+] (355 aa).

The NADPH site is built by Ser-14, Trp-15, Arg-35, and Lys-117. Positions 117, 147, and 149 each coordinate sn-glycerol 3-phosphate. An NADPH-binding site is contributed by Ala-151. Residues Lys-202, Asp-255, Ser-265, Arg-266, and Asn-267 each contribute to the sn-glycerol 3-phosphate site. Residue Lys-202 is the Proton acceptor of the active site. An NADPH-binding site is contributed by Arg-266. Residues Ile-290 and Glu-292 each contribute to the NADPH site.

It belongs to the NAD-dependent glycerol-3-phosphate dehydrogenase family.

It is found in the cytoplasm. It catalyses the reaction sn-glycerol 3-phosphate + NAD(+) = dihydroxyacetone phosphate + NADH + H(+). It carries out the reaction sn-glycerol 3-phosphate + NADP(+) = dihydroxyacetone phosphate + NADPH + H(+). The protein operates within membrane lipid metabolism; glycerophospholipid metabolism. In terms of biological role, catalyzes the reduction of the glycolytic intermediate dihydroxyacetone phosphate (DHAP) to sn-glycerol 3-phosphate (G3P), the key precursor for phospholipid synthesis. In Lawsonia intracellularis (strain PHE/MN1-00), this protein is Glycerol-3-phosphate dehydrogenase [NAD(P)+].